Here is a 418-residue protein sequence, read N- to C-terminus: Sialidase-3 (418 aa).

Positions 24-27 (YRIP) match the FRIP motif motif. Substrate contacts are provided by R25 and R45. D50 functions as the Proton acceptor in the catalytic mechanism. The BNR 1 repeat unit spans residues 129–140 (LYSEDSGCSWGE). Positions 179 and 181 each coordinate substrate. The BNR 2 repeat unit spans residues 201–212 (FYSDDLGVTWHC). Residues E223 and R243 each coordinate substrate. One copy of the BNR 3 repeat lies at 252–263 (AFSTDSGDCFQK). Position 339 (R339) interacts with substrate. The active-site Nucleophile is Y369. E386 is an active-site residue.

Belongs to the glycosyl hydrolase 33 family. As to quaternary structure, interacts with CAV1; this interaction enhances NEU3 sialidase activity within caveola. Interacts with EGFR; this interaction mediates desialylation of EGFR enhancing downstream signaling. Post-translationally, palmitoylated; may regulate intracellular trafficking and anchorage to plasma membrane and endomembranes. In terms of tissue distribution, expressed in brain, cardiac muscle and weakly in liver.

The protein resides in the cell membrane. Its subcellular location is the membrane. The protein localises to the caveola. It is found in the early endosome membrane. It localises to the recycling endosome membrane. The protein resides in the lysosome membrane. The catalysed reaction is Hydrolysis of alpha-(2-&gt;3)-, alpha-(2-&gt;6)-, alpha-(2-&gt;8)- glycosidic linkages of terminal sialic acid residues in oligosaccharides, glycoproteins, glycolipids, colominic acid and synthetic substrates.. The enzyme catalyses a ganglioside GD1a + H2O = a ganglioside GM1 + N-acetylneuraminate. It catalyses the reaction a ganglioside GD1a (d18:1(4E)) + H2O = a ganglioside GM1 (d18:1(4E)) + N-acetylneuraminate. It carries out the reaction a ganglioside GD1b + H2O = a ganglioside GM1 + N-acetylneuraminate. The catalysed reaction is a ganglioside GD1b (d18:1(4E)) + H2O = a ganglioside GM1 (d18:1(4E)) + N-acetylneuraminate. The enzyme catalyses a ganglioside GD3 + H2O = a ganglioside GM3 + N-acetylneuraminate. It catalyses the reaction a ganglioside GD3 (d18:1(4E)) + H2O = a ganglioside GM3 (d18:1(4E)) + N-acetylneuraminate. It carries out the reaction a ganglioside GM3 + H2O = a beta-D-galactosyl-(1-&gt;4)-beta-D-glucosyl-(1&lt;-&gt;1)-ceramide + N-acetylneuraminate. The catalysed reaction is a ganglioside GM1 + H2O = a ganglioside GA1 + N-acetylneuraminate. The enzyme catalyses a ganglioside GM1 (d18:1(4E)) + H2O = a ganglioside GA1 (d18:1(4E)) + N-acetylneuraminate. It catalyses the reaction a ganglioside GM2 (d18:1(4E)) + H2O = a ganglioside GA2 (d18:1(4E)) + N-acetylneuraminate. It carries out the reaction a ganglioside GM3 (d18:1(4E)) + H2O = a beta-D-Gal-(1-&gt;4)-beta-D-Glc-(1&lt;-&gt;1)-Cer(d18:1(4E)) + N-acetylneuraminate. The catalysed reaction is a ganglioside GT1b + H2O = a ganglioside GD1b + N-acetylneuraminate. Its function is as follows. Exo-alpha-sialidase that catalyzes the hydrolytic cleavage of the terminal sialic acid (N-acetylneuraminic acid, Neu5Ac) of a glycan moiety in the catabolism of glycolipids, glycoproteins and oligosacharides. Displays high catalytic efficiency for gangliosides including alpha-(2-&gt;3)-sialylated GD1a and GM3 and alpha-(2-&gt;8)-sialylated GD3. Plays a role in the regulation of transmembrane signaling through the modulation of ganglioside content of the lipid bilayer and by direct interaction with signaling receptors, such as EGFR. Desialylates EGFR and activates downstream signaling in proliferating cells. Contributes to clathrin-mediated endocytosis by regulating sorting of endocytosed receptors to early and recycling endosomes. The polypeptide is Sialidase-3 (Neu3) (Rattus norvegicus (Rat)).